The following is a 346-amino-acid chain: Putative toluene-4-sulfonate monooxygenase system iron-sulfur subunit TsaM2 (346 aa).

The region spanning 7–108 (WYVAGMATDC…LVERHGLLWI (102 aa)) is the Rieske domain. [2Fe-2S] cluster-binding residues include cysteine 47, histidine 49, cysteine 66, and histidine 69.

As to quaternary structure, homotetramer. Part of the p-toluenesulfonate methyl-monooxygenase complex TsaBM, comprising the reductase TsaB and the oxygenase TsaM. Requires [2Fe-2S] cluster as cofactor.

It catalyses the reaction toluene-4-sulfonate + NADH + O2 + H(+) = 4-(hydroxymethyl)benzenesulfonate + NAD(+) + H2O. In terms of biological role, involved in the toluene-4-sulfonate degradation pathway. Does not discriminate between the sulfonate and the carboxyl substituents and can also be involved in the p-toluenecarboxylate degradation pathway. In Comamonas testosteroni (Pseudomonas testosteroni), this protein is Putative toluene-4-sulfonate monooxygenase system iron-sulfur subunit TsaM2 (tsaM2).